Here is a 145-residue protein sequence, read N- to C-terminus: Large ribosomal subunit protein bL19 (145 aa).

Residues 112-130 show a composition bias toward basic and acidic residues; sequence GKSARIKERRPAKAVEKTS. The interval 112–145 is disordered; that stretch reads GKSARIKERRPAKAVEKTSKPASAKKPAAKANKK.

This sequence belongs to the bacterial ribosomal protein bL19 family.

In terms of biological role, this protein is located at the 30S-50S ribosomal subunit interface and may play a role in the structure and function of the aminoacyl-tRNA binding site. This chain is Large ribosomal subunit protein bL19, found in Malacoplasma penetrans (strain HF-2) (Mycoplasma penetrans).